The sequence spans 299 residues: Pentalenolactone F synthase (299 aa).

Fe cation-binding residues include His-105 and Asp-107. The 2-oxoglutarate site is built by Thr-133 and Trp-251. His-266 is a binding site for Fe cation. 2-oxoglutarate is bound at residue Arg-277.

It belongs to the TfdA dioxygenase family. Fe(2+) serves as cofactor.

The catalysed reaction is pentalenolactone D + 2 2-oxoglutarate + 2 O2 = pentalenolactone F + 2 succinate + 2 CO2 + H2O. The protein operates within antibiotic biosynthesis; pentalenolactone biosynthesis. With respect to regulation, activated by ascorbate. Catalyzes the Fe(2+) and alpha-ketoglutarate-dependent oxidation of pentalenolactone D to pentalenolactone F in the biosynthesis of pentalenolactone antibiotic. Also able to catalyze the oxidation of pentalenolactone D to pentalenolactone E. This chain is Pentalenolactone F synthase (pntD), found in Streptomyces arenae.